Reading from the N-terminus, the 151-residue chain is Coiled-coil-helix-coiled-coil-helix domain-containing protein 2 (151 aa).

2 disordered regions span residues 1-50 (MPRG…AAAP) and 77-111 (GHAITGGFSGGSNAEPARPDITYQEPQGTQPAQQQ). Positions 10-26 (SRMAPPASRAPQMRAAP) are enriched in low complexity. The span at 27 to 38 (RPAPVAQPPAAA) shows a compositional bias: pro residues. 2 stretches are compositionally biased toward low complexity: residues 39–50 (PPSAVGSSAAAP) and 100–111 (QEPQGTQPAQQQ). The CHCH domain maps to 111–151 (QQPCLYEIKQFLECAQNQGDIKLCEGFNEVLKQCRLANGLA). 2 consecutive short sequence motifs (cx9C motif) follow at residues 114 to 124 (CLYEIKQFLEC) and 134 to 144 (CEGFNEVLKQC). Cystine bridges form between cysteine 114/cysteine 144 and cysteine 124/cysteine 134.

Interacts with RBPJ.

The protein localises to the nucleus. The protein resides in the mitochondrion. Its subcellular location is the mitochondrion intermembrane space. Transcription factor. Binds to the oxygen responsive element of COX4I2 and activates its transcription under hypoxia conditions (4% oxygen), as well as normoxia conditions (20% oxygen). The protein is Coiled-coil-helix-coiled-coil-helix domain-containing protein 2 (CHCHD2) of Homo sapiens (Human).